Consider the following 848-residue polypeptide: MSSGANITYASRKRRKPVQKTVKPIPAEGIKSNPSKRHRDRLNTELDRLASLLPFPQDVINKLDKLSVLRLSVSYLRAKSFFDVALKSTPADRNGGQDQCRAQIRDWQDLQEGEFLLQALNGFVLVVTADALVFYASSTIQDYLGFQQSDVIHQSVYELIHTEDRAEFQRQLHWALNPDSAQGVDEAHGPPQAAVYYTPDQLPPENASFMERCFRCRLRCLLDNSSGFLAMNFQGRLKYLHGQNKKGKDGALLPPQLALFAIATPLQPPSILEIRTKNFIFRTKHKLDFTPIGCDAKGQLILGYTEVELCTRGSGYQFIHAADMLHCAESHIRMIKTGESGMTVFRLLAKHSRWRWVQSNARLIYRNGRPDYIIVTQRPLTDEEGREHLQKRSTSLPFMFATGEAVLYEISSPFSPIMDPLPIRTKSNTSRKDWAPQSTPSKDSFHPSSLMSALIQQDESIYLCPPSSPAPLDSHFLMGSVSKCGSWQDSFAAAGSEAALKHEQIGHAQDVNLALSGGPSELFPDNKNNDLYNIMRNLGIDFEDIRSMQNEEFFRTDSTAAGEVDFKDIDITDEILTYMQDSLNNSTLMNSACQQQPVTQHLSCMLQERLQLEQQQQLQQPPPQALEPQQQLCQMVCPQQDLGPKHTQINGTFASWNPTPPVSFNCPQQELKHYQLFSSLQGTAQEFPYKPEVDSVPYTQNFAPCNQPLLPEHSKSVQLDFPGRDFEPSLHPTTSNLDFVSCLQVPENQSHGINSQSAMVSPQAYYAGAMSMYQCQPGPQRTPVDQTQYSSEIPGSQAFLSKVQSRGIFNETYSSDLSSIGHAAQTTGHLHHLAEARPLPDITPGGFL.

The propeptide occupies M1–Y9. The disordered stretch occupies residues M1–H38. Short sequence motifs (nuclear localization signal) lie at residues R12–R15 and K36–R41. The region spanning P26 to K79 is the bHLH domain. Residues R37 to K65 form a DNA-binding region. Required for maintaining the overall integrity of the AHR:ARNT heterodimer and its transcriptional activity regions lie at residues L49–F81, L116–V124, and F260–I262. The Nuclear export signal signature appears at L63–L71. The PAS 1 domain maps to Q111–A175. Residues L266–K336 enclose the PAS 2 domain. The PAC domain occupies M342 to E383. Positions L421–S449 are disordered. Over residues P436–S449 the composition is skewed to polar residues.

As to quaternary structure, homodimer. Heterodimer; efficient DNA binding requires dimerization with another bHLH protein. Interacts with ARNT; the heterodimer ARNT:AHR binds to core DNA sequence 5'-TGCGTG-3' within the dioxin response element (DRE) of target gene promoters and activates their transcription. Binds MYBBP1A. Interacts with coactivators including SRC-1, RIP140 and NOCA7, and with the corepressor SMRT. Interacts with NEDD8 and IVNS1ABP. Interacts with BMAL1. Interacts with HSP90AB1. Interacts with TIPARP; leading to mono-ADP-ribosylation of AHR and subsequent inhibition of AHR. Post-translationally, mono-ADP-ribosylated, leading to inhibit transcription activator activity of AHR.

Its subcellular location is the cytoplasm. The protein resides in the nucleus. Ligand-activated transcription factor that enables cells to adapt to changing conditions by sensing compounds from the environment, diet, microbiome and cellular metabolism, and which plays important roles in development, immunity and cancer. Upon ligand binding, translocates into the nucleus, where it heterodimerizes with ARNT and induces transcription by binding to xenobiotic response elements (XRE). Regulates a variety of biological processes, including angiogenesis, hematopoiesis, drug and lipid metabolism, cell motility and immune modulation. Xenobiotics can act as ligands: upon xenobiotic-binding, activates the expression of multiple phase I and II xenobiotic chemical metabolizing enzyme genes (such as the CYP1A1 gene). Mediates biochemical and toxic effects of halogenated aromatic hydrocarbons. Next to xenobiotics, natural ligands derived from plants, microbiota, and endogenous metabolism are potent AHR agonists. Tryptophan (Trp) derivatives constitute an important class of endogenous AHR ligands. Acts as a negative regulator of anti-tumor immunity: indoles and kynurenic acid generated by Trp catabolism act as ligand and activate AHR, thereby promoting AHR-driven cancer cell motility and suppressing adaptive immunity. Regulates the circadian clock by inhibiting the basal and circadian expression of the core circadian component PER1. Inhibits PER1 by repressing the CLOCK-BMAL1 heterodimer mediated transcriptional activation of PER1. The heterodimer ARNT:AHR binds to core DNA sequence 5'-TGCGTG-3' within the dioxin response element (DRE) of target gene promoters and activates their transcription. This chain is Aryl hydrocarbon receptor (Ahr), found in Mus musculus castaneus (Southeastern Asian house mouse).